Reading from the N-terminus, the 549-residue chain is Limonene dehydrogenase subunit B (549 aa).

It belongs to the carotenoid/retinoid oxidoreductase family. In terms of assembly, heterodimer composed of CtmA and CtmB. FAD serves as cofactor.

It is found in the cytoplasm. It catalyses the reaction (4S)-limonene + A + H2O = (4S)-perillyl alcohol + AH2. It carries out the reaction (4R)-limonene + A + H2O = (4R)-perillyl alcohol + AH2. Its pathway is terpene metabolism; monoterpene degradation. With respect to regulation, the presence of molecular oxygen causes a 40% reduction in specific activity. Involved in the degradation of the cyclic monoterpene limonene. Catalyzes the oxidation of limonene at the primary methyl group, forming perillyl alcohol. Hydroxylates the R- and S-enantiomers to their respective enantiomeric form of perillyl alcohol at a similar rate. Native CtmAB oxidizes a wide range of monocyclic monoterpenes containing the allylic methyl group motif (1-methyl-cyclohex-1-ene). Can also catalyze the reverse reaction, the reduction of perillyl alcohol to limonene, but with lower efficiency. Cannot use molecular oxygen as an electron acceptor. The natural electron acceptor is likely a heterodimeric electron transfer flavoprotein (ETF). The chain is Limonene dehydrogenase subunit B from Castellaniella defragrans (strain DSM 12143 / CCUG 39792 / 65Phen) (Alcaligenes defragrans).